The chain runs to 563 residues: Pyruvate decarboxylase isozyme 1 (563 aa).

Serine 2 carries the N-acetylserine modification. Pyruvate-binding residues include aspartate 28, histidine 115, and tyrosine 157. Residue arginine 161 is modified to Omega-N-methylarginine. Residue lysine 212 forms a Glycyl lysine isopeptide (Lys-Gly) (interchain with G-Cter in ubiquitin) linkage. Position 223 is a phosphoserine (serine 223). Arginine 224 lines the pyruvate pocket. A Glycyl lysine isopeptide (Lys-Gly) (interchain with G-Cter in ubiquitin) cross-link involves residue lysine 233. The residue at position 266 (threonine 266) is a Phosphothreonine. Residues lysine 269 and lysine 332 each participate in a glycyl lysine isopeptide (Lys-Gly) (interchain with G-Cter in ubiquitin) cross-link. A phosphothreonine mark is found at threonine 336 and threonine 353. Thiamine diphosphate-binding positions include threonine 390 and 413–415 (GSI). Aspartate 444 serves as a coordination point for Mg(2+). Thiamine diphosphate contacts are provided by residues 445–446 (GS) and 471–476 (NDGYTI). Mg(2+)-binding residues include asparagine 471 and glycine 473. Glutamate 477 is a binding site for pyruvate. Residues lysine 484, lysine 505, and lysine 520 each participate in a glycyl lysine isopeptide (Lys-Gly) (interchain with G-Cter in ubiquitin) cross-link. At threonine 522 the chain carries Phosphothreonine. The residue at position 526 (serine 526) is a Phosphoserine.

Belongs to the TPP enzyme family. Homotetramer. Mg(2+) is required as a cofactor. Requires thiamine diphosphate as cofactor. Post-translationally, cleavage of N-terminal methionine and N-terminal acetylation by NAT1/ARD1.

Its subcellular location is the cytoplasm. It localises to the nucleus. It catalyses the reaction pyruvate + H(+) = acetaldehyde + CO2. It carries out the reaction 3-methyl-2-oxobutanoate + H(+) = 2-methylpropanal + CO2. The catalysed reaction is (S)-3-methyl-2-oxopentanoate + H(+) = 2-methylbutanal + CO2. The enzyme catalyses indole-3-pyruvate + H(+) = indole-3-acetaldehyde + CO2. It catalyses the reaction 3-phenylpyruvate + H(+) = 2-phenylacetaldehyde + CO2. It carries out the reaction 2-oxobutanoate + H(+) = propanal + CO2. The catalysed reaction is 2-oxopentanoate + H(+) = butanal + CO2. The enzyme catalyses 2 acetaldehyde = acetoin. It catalyses the reaction acetaldehyde + pyruvate + H(+) = acetoin + CO2. The protein operates within fermentation; ethanol fermentation. It participates in amino-acid degradation; Ehrlich pathway. Its activity is regulated as follows. Allosterically activated by its substrate, pyruvate. Major of three pyruvate decarboxylases (PDC1, PDC5, PDC6) implicated in the nonoxidative conversion of pyruvate to acetaldehyde and carbon dioxide during alcoholic fermentation. Most of the produced acetaldehyde is subsequently reduced to ethanol, but some is required for cytosolic acetyl-CoA production for biosynthetic pathways. The enzyme is also one of five 2-oxo acid decarboxylases (PDC1, PDC5, PDC6, ARO10, and THI3) able to decarboxylate more complex 2-oxo acids (alpha-ketoacids) than pyruvate, which seem mainly involved in amino acid catabolism. Here the enzyme catalyzes the decarboxylation of amino acids, which, in a first step, have been transaminated to the corresponding 2-oxo acids. In a third step, the resulting aldehydes are reduced to alcohols, collectively referred to as fusel oils or alcohols. Its preferred substrates are the transaminated amino acids derived from threonine (2-oxobutanoate), norvaline (2-oxopentanoate), valine (3-methyl-2-oxobutanoate, also alpha-keto-isovalerate), isoleucine ((3S)-3-methyl-2-oxopentanoate, also alpha-keto-beta-methylvalerate), phenylalanine (phenylpyruvate), and tryptophan (3-(indol-3-yl)pyruvate), whereas transaminated leucine is no substrate. In a side-reaction the carbanionic intermediate (or active aldehyde) generated by decarboxylation or by activation of an aldehyde can react with an aldehyde via condensation (or carboligation) yielding a 2-hydroxy ketone, collectively called acyloins. The polypeptide is Pyruvate decarboxylase isozyme 1 (Saccharomyces cerevisiae (strain ATCC 204508 / S288c) (Baker's yeast)).